Consider the following 98-residue polypeptide: NADH-ubiquinone oxidoreductase chain 4L (98 aa).

The next 2 membrane-spanning stretches (helical) occupy residues 26-46 and 61-81; these read LVAS…MATL and IILL…LISI.

It belongs to the complex I subunit 4L family. Core subunit of respiratory chain NADH dehydrogenase (Complex I) which is composed of 45 different subunits.

It localises to the mitochondrion inner membrane. The catalysed reaction is a ubiquinone + NADH + 5 H(+)(in) = a ubiquinol + NAD(+) + 4 H(+)(out). Its function is as follows. Core subunit of the mitochondrial membrane respiratory chain NADH dehydrogenase (Complex I) which catalyzes electron transfer from NADH through the respiratory chain, using ubiquinone as an electron acceptor. Part of the enzyme membrane arm which is embedded in the lipid bilayer and involved in proton translocation. This chain is NADH-ubiquinone oxidoreductase chain 4L (MT-ND4L), found in Macaca nigrescens (Gorontalo macaque).